We begin with the raw amino-acid sequence, 437 residues long: GTPase Der (437 aa).

EngA-type G domains follow at residues 3-167 (NLVA…SKEG) and 176-352 (PRFA…QART). Residues 9–16 (GRPNVGKS), 56–60 (DTGGW), 119–122 (NKTD), 182–189 (GRPNAGKS), 229–233 (DTAGI), and 294–297 (NKWD) each bind GTP. The 85-residue stretch at 353–437 (TRIPTARLNE…TPINIFIRQK (85 aa)) folds into the KH-like domain.

The protein belongs to the TRAFAC class TrmE-Era-EngA-EngB-Septin-like GTPase superfamily. EngA (Der) GTPase family. As to quaternary structure, associates with the 50S ribosomal subunit.

Its function is as follows. GTPase that plays an essential role in the late steps of ribosome biogenesis. In Phocaeicola vulgatus (strain ATCC 8482 / DSM 1447 / JCM 5826 / CCUG 4940 / NBRC 14291 / NCTC 11154) (Bacteroides vulgatus), this protein is GTPase Der.